A 258-amino-acid polypeptide reads, in one-letter code: MEEQGTGIRVEALSAEFAAQAAAWAERLELPLHDEAADFAVQVGADGLQIQQLGPQAPGPVRVDFVEGQAAHRRQFGGGNGQMIAKAVGIAQGVRPQVLDATAGLGKDAFVLASLGCQMTLIERQPLIAALLEDGLARARADEEVGAIVGRMRLLTGNAIERMRAWEGEPPQVIYLDPMFPHRDKSALVKKEMRVFRPLVGDDLDAPALLEAALALASHRVVVKRPRKAPIIDGPKPSHSLEGKSSRYDIYPKKALKA.

Residues 123-124 and Asp-177 contribute to the S-adenosyl-L-methionine site; that span reads ER. Residues 232-258 are disordered; that stretch reads IDGPKPSHSLEGKSSRYDIYPKKALKA. Basic and acidic residues predominate over residues 239–252; sequence HSLEGKSSRYDIYP.

It belongs to the methyltransferase superfamily. RsmJ family.

The protein localises to the cytoplasm. It carries out the reaction guanosine(1516) in 16S rRNA + S-adenosyl-L-methionine = N(2)-methylguanosine(1516) in 16S rRNA + S-adenosyl-L-homocysteine + H(+). Its function is as follows. Specifically methylates the guanosine in position 1516 of 16S rRNA. This is Ribosomal RNA small subunit methyltransferase J from Pseudomonas putida (strain GB-1).